The sequence spans 257 residues: Isoprenyl transferase 1 (257 aa).

Aspartate 37 is an active-site residue. Residue aspartate 37 coordinates Mg(2+). Substrate contacts are provided by residues 38–41 (GNRR), tryptophan 42, histidine 54, and 82–84 (STD). Residue asparagine 85 is the Proton acceptor of the active site. Substrate contacts are provided by residues phenylalanine 86, arginine 88, arginine 206, and 212–214 (RLS). Glutamate 225 serves as a coordination point for Mg(2+).

The protein belongs to the UPP synthase family. In terms of assembly, homodimer. Mg(2+) serves as cofactor.

In terms of biological role, catalyzes the condensation of isopentenyl diphosphate (IPP) with allylic pyrophosphates generating different type of terpenoids. This chain is Isoprenyl transferase 1, found in Streptomyces avermitilis (strain ATCC 31267 / DSM 46492 / JCM 5070 / NBRC 14893 / NCIMB 12804 / NRRL 8165 / MA-4680).